Reading from the N-terminus, the 1012-residue chain is Structural polyprotein (1012 aa).

Residue Asp30 participates in a divalent metal cation binding. In terms of domain architecture, Peptidase S50 spans 513–755; sequence ADKGYEVVAN…AGRQYHLAMA (243 aa). Ser652 acts as the Nucleophile in catalysis. Lys692 is an active-site residue. The interval 969 to 1012 is disordered; it reads AMEMKHRNPRRALPKPKPKPNAPTQRPPGRLGRWIRTVSDEDLE. Over residues 975–986 the composition is skewed to basic residues; that stretch reads RNPRRALPKPKP. The interaction with VP1 protein stretch occupies residues 1003–1012; the sequence is IRTVSDEDLE.

Homotrimer. A central divalent metal stabilizes the VP2 trimer. Interacts with host ITGA4/ITGB1. As to quaternary structure, homodimer. Interacts (via C-terminus) with VP1 in the cytoplasm. Interacts with VP2. Specific enzymatic cleavages yield mature proteins. The capsid assembly seems to be regulated by polyprotein processing. The protease VP4 cleaves itself off the polyprotein, thus releasing pre-VP2 and VP3 within the infected cell. During capsid assembly, the C-terminus of pre-VP2 is further processed by VP4, giving rise to VP2, the external capsid protein and three small peptides that all stay closely associated with the capsid.

It localises to the virion. It is found in the host cytoplasm. Functionally, capsid protein VP2 self assembles to form an icosahedral capsid with a T=13 symmetry, about 70 nm in diameter, and consisting of 260 VP2 trimers. The capsid encapsulates the genomic dsRNA. VP2 is also involved in attachment and entry into the host cell by interacting with host ITGA4/ITGB1. Its function is as follows. The precursor of VP2 plays an important role in capsid assembly. First, pre-VP2 and VP2 oligomers assemble to form a procapsid. Then, the pre-VP2 intermediates may be processed into VP2 proteins by proteolytic cleavage mediated by VP4 to obtain the mature virion. The final capsid is composed of pentamers and hexamers but VP2 has a natural tendency to assemble into all-pentameric structures. Therefore pre-VP2 may be required to allow formation of the hexameric structures. Protease VP4 is a serine protease that cleaves the polyprotein into its final products. Pre-VP2 is first partially cleaved, and may be completely processed by VP4 upon capsid maturation. In terms of biological role, capsid protein VP3 plays a key role in virion assembly by providing a scaffold for the capsid made of VP2. May self-assemble to form a T=4-like icosahedral inner-capsid composed of at least 180 trimers. Plays a role in genomic RNA packaging by recruiting VP1 into the capsid and interacting with the dsRNA genome segments to form a ribonucleoprotein complex. Additionally, the interaction of the VP3 C-terminal tail with VP1 removes the inherent structural blockade of the polymerase active site. Thus, VP3 can also function as a transcriptional activator. Functionally, structural peptide 1 is a small peptide derived from pre-VP2 C-terminus. It destabilizes and perforates cell membranes, suggesting a role during entry. Its function is as follows. Structural peptide 2 is a small peptide derived from pVP2 C-terminus. It is not essential for the virus viability, but viral growth is affected when missing. Structural peptide 3 is a small peptide derived from pVP2 C-terminus. It is not essential for the virus viability, but viral growth is affected when missing. In terms of biological role, structural peptide 4 is a small peptide derived from pVP2 C-terminus. It is essential for the virus viability. This Avian infectious bursal disease virus (strain Cu-1) (IBDV) protein is Structural polyprotein.